Reading from the N-terminus, the 347-residue chain is NADH-ubiquinone oxidoreductase chain 2 (347 aa).

Helical transmembrane passes span Pro-3–Ser-23, His-25–Met-45, Tyr-59–Met-79, Ile-96–Pro-116, Gly-127–Pro-147, Leu-149–Gly-169, Ile-178–Pro-198, Ser-201–Ile-221, Ile-239–Gly-259, Asn-274–Met-294, and Thr-326–Leu-346.

The protein belongs to the complex I subunit 2 family. Core subunit of respiratory chain NADH dehydrogenase (Complex I) which is composed of 45 different subunits. Interacts with TMEM242.

It localises to the mitochondrion inner membrane. It catalyses the reaction a ubiquinone + NADH + 5 H(+)(in) = a ubiquinol + NAD(+) + 4 H(+)(out). Core subunit of the mitochondrial membrane respiratory chain NADH dehydrogenase (Complex I) which catalyzes electron transfer from NADH through the respiratory chain, using ubiquinone as an electron acceptor. Essential for the catalytic activity and assembly of complex I. This chain is NADH-ubiquinone oxidoreductase chain 2, found in Sylvisorex ollula (Greater forest shrew).